A 233-amino-acid chain; its full sequence is Rab-like protein 3 (233 aa).

The tract at residues 1–233 is small GTPase-like; the sequence is MASLDRVKVL…RFNFKSLHSD (233 aa). GTP-binding positions include 16-21, 148-150, and 179-180; these read GVGKSS, KFD, and DC.

It belongs to the small GTPase superfamily. Rab family. In terms of assembly, homodimer.

In terms of biological role, required for KRAS signaling regulation and modulation of cell proliferation. Regulator of KRAS prenylation, and probably prenylation of other small GTPases. Required for lymphocyte development and function. Not required for myeloid cell development. This is Rab-like protein 3 (rabl3) from Danio rerio (Zebrafish).